Here is a 176-residue protein sequence, read N- to C-terminus: 3-hydroxydecanoyl-[acyl-carrier-protein] dehydratase (176 aa).

The active site involves His-71.

Belongs to the thioester dehydratase family. FabA subfamily. Homodimer.

It is found in the cytoplasm. The enzyme catalyses a (3R)-hydroxyacyl-[ACP] = a (2E)-enoyl-[ACP] + H2O. The catalysed reaction is (3R)-hydroxydecanoyl-[ACP] = (2E)-decenoyl-[ACP] + H2O. It carries out the reaction (2E)-decenoyl-[ACP] = (3Z)-decenoyl-[ACP]. It functions in the pathway lipid metabolism; fatty acid biosynthesis. Its function is as follows. Necessary for the introduction of cis unsaturation into fatty acids. Catalyzes the dehydration of (3R)-3-hydroxydecanoyl-ACP to E-(2)-decenoyl-ACP and then its isomerization to Z-(3)-decenoyl-ACP. Can catalyze the dehydratase reaction for beta-hydroxyacyl-ACPs with saturated chain lengths up to 16:0, being most active on intermediate chain length. The chain is 3-hydroxydecanoyl-[acyl-carrier-protein] dehydratase from Afipia carboxidovorans (strain ATCC 49405 / DSM 1227 / KCTC 32145 / OM5) (Oligotropha carboxidovorans).